Consider the following 151-residue polypeptide: Small heat shock protein HspH (151 aa).

A sHSP domain is found at 28–138; the sequence is RAGEDNYPPY…KPRRIAINAA (111 aa).

Belongs to the small heat shock protein (HSP20) family.

This Bradyrhizobium diazoefficiens (strain JCM 10833 / BCRC 13528 / IAM 13628 / NBRC 14792 / USDA 110) protein is Small heat shock protein HspH (hspH).